A 442-amino-acid polypeptide reads, in one-letter code: Histidine--tRNA ligase (442 aa).

It belongs to the class-II aminoacyl-tRNA synthetase family. As to quaternary structure, homodimer.

It is found in the cytoplasm. The enzyme catalyses tRNA(His) + L-histidine + ATP = L-histidyl-tRNA(His) + AMP + diphosphate + H(+). The chain is Histidine--tRNA ligase from Helicobacter acinonychis (strain Sheeba).